We begin with the raw amino-acid sequence, 122 residues long: Large ribosomal subunit protein uL14 (122 aa).

Belongs to the universal ribosomal protein uL14 family. Part of the 50S ribosomal subunit. Forms a cluster with proteins L3 and L19. In the 70S ribosome, L14 and L19 interact and together make contacts with the 16S rRNA in bridges B5 and B8.

Its function is as follows. Binds to 23S rRNA. Forms part of two intersubunit bridges in the 70S ribosome. The sequence is that of Large ribosomal subunit protein uL14 from Mycolicibacterium smegmatis (strain ATCC 700084 / mc(2)155) (Mycobacterium smegmatis).